The primary structure comprises 260 residues: Flap endonuclease Xni (260 aa).

Mg(2+) is bound at residue D104. The 90-residue stretch at 160-249 (VSPQQLTDYW…LNGNLQQLRL (90 aa)) folds into the 5'-3' exonuclease domain. K(+)-binding residues include L171, A172, P180, V182, and I185. Residues 184–189 (GIGPKS) are interaction with DNA.

Belongs to the Xni family. It depends on Mg(2+) as a cofactor. The cofactor is K(+).

In terms of biological role, has flap endonuclease activity. During DNA replication, flap endonucleases cleave the 5'-overhanging flap structure that is generated by displacement synthesis when DNA polymerase encounters the 5'-end of a downstream Okazaki fragment. This is Flap endonuclease Xni from Pectobacterium carotovorum subsp. carotovorum (strain PC1).